Reading from the N-terminus, the 919-residue chain is WD repeat-containing protein 47 (919 aa).

The LisH domain occupies 10–42; that stretch reads KEVEIIKLILDFLNSKKLHISMLALEKESGVIN. The CTLH domain occupies 45–102; that stretch reads FSDDMLFLRQLILDGQWDEVLQFIQPLECMEKFDKKRFRYIILKQKFLEALCVNNAMS. A Phosphothreonine modification is found at threonine 285. Phosphoserine occurs at positions 289, 292, 297, and 312. Positions 393–421 are disordered; sequence GQSSVSEKEPANGAQNPGPAKQEKNELRD. Serine 422 carries the phosphoserine modification. The tract at residues 500–590 is disordered; it reads LNQQCNGSKG…SLSRSKGEED (91 aa). The segment covering 517-551 has biased composition (polar residues); it reads VTSFTTPPQDSSQRLTHDASNIHTSTPRNPGSTNH. Phosphothreonine is present on threonine 542. 7 WD repeats span residues 604-643, 659-698, 706-748, 753-791, 798-837, 840-879, and 886-918; these read EDTQ…DPSA, HHKG…CNAT, MHDG…GQGL, GHTG…CVRV, GTGS…MVQS, PHSS…TKQL, and EHKD…WTYN.

Interacts with MAP1S (via WD repeats).

It is found in the cytoplasm. The protein resides in the cytoskeleton. The sequence is that of WD repeat-containing protein 47 (WDR47) from Homo sapiens (Human).